We begin with the raw amino-acid sequence, 551 residues long: Arginine--tRNA ligase (551 aa).

The 'HIGH' region signature appears at 123-133 (ANPTGPLTIGR).

It belongs to the class-I aminoacyl-tRNA synthetase family. In terms of assembly, monomer.

It is found in the cytoplasm. The catalysed reaction is tRNA(Arg) + L-arginine + ATP = L-arginyl-tRNA(Arg) + AMP + diphosphate. This chain is Arginine--tRNA ligase, found in Chlorobaculum tepidum (strain ATCC 49652 / DSM 12025 / NBRC 103806 / TLS) (Chlorobium tepidum).